Reading from the N-terminus, the 91-residue chain is Progonadoliberin-1 (91 aa).

An N-terminal signal peptide occupies residues 1–21; the sequence is MVVKTWMPWLLVSSVLSQGCC. The residue at position 22 (glutamine 22) is a Pyrrolidone carboxylic acid. Glycine 31 carries the post-translational modification Glycine amide.

Belongs to the GnRH family. In terms of tissue distribution, expressed in the cell bodies of a cluster of neurons in the preoptic region.

The protein resides in the secreted. In terms of biological role, stimulates the secretion of gonadotropins. The chain is Progonadoliberin-1 (gnrh1) from Oryzias latipes (Japanese rice fish).